An 878-amino-acid chain; its full sequence is Phosphoenolpyruvate carboxylase (878 aa).

Residues His-140 and Lys-545 contribute to the active site.

Belongs to the PEPCase type 1 family. Mg(2+) is required as a cofactor.

It carries out the reaction oxaloacetate + phosphate = phosphoenolpyruvate + hydrogencarbonate. Forms oxaloacetate, a four-carbon dicarboxylic acid source for the tricarboxylic acid cycle. The polypeptide is Phosphoenolpyruvate carboxylase (Pseudomonas aeruginosa (strain ATCC 15692 / DSM 22644 / CIP 104116 / JCM 14847 / LMG 12228 / 1C / PRS 101 / PAO1)).